The sequence spans 602 residues: Transcription termination factor Rho (602 aa).

2 disordered regions span residues 1-35 (MTDT…EPAG) and 76-216 (ANGA…AEAE). A compositionally biased stretch (basic and acidic residues) spans 85-96 (SAQEHDKGDRPP). The segment covering 100–120 (APATQGEQTPTEQIDSQSQQV) has biased composition (polar residues). Low complexity predominate over residues 172 to 182 (GDQQASGGQQA). Residues 183-192 (RGDEDGEARQ) show a composition bias toward basic and acidic residues. Over residues 193–206 (GRRGRRFRDRRRRG) the composition is skewed to basic residues. In terms of domain architecture, Rho RNA-BD spans 223–301 (VQPVAGILDV…VRLDSINGGS (79 aa)). Residues 344–349 (GKGQRA), 356–361 (KAGKTT), and arginine 387 each bind ATP.

It belongs to the Rho family. Homohexamer. The homohexamer assembles into an open ring structure.

Facilitates transcription termination by a mechanism that involves Rho binding to the nascent RNA, activation of Rho's RNA-dependent ATPase activity, and release of the mRNA from the DNA template. The polypeptide is Transcription termination factor Rho (Mycobacterium bovis (strain ATCC BAA-935 / AF2122/97)).